We begin with the raw amino-acid sequence, 343 residues long: GTP 3',8-cyclase (343 aa).

The 226-residue stretch at 19 to 244 folds into the Radical SAM core domain; sequence PFGRNISYLR…TDLDDSTGGP (226 aa). Arg-28 contacts GTP. Residues Cys-35 and Cys-39 each coordinate [4Fe-4S] cluster. Residue Tyr-41 coordinates S-adenosyl-L-methionine. Position 42 (Cys-42) interacts with [4Fe-4S] cluster. GTP is bound at residue Arg-77. Residue Gly-81 coordinates S-adenosyl-L-methionine. Thr-111 provides a ligand contact to GTP. Ser-135 is an S-adenosyl-L-methionine binding site. Lys-171 lines the GTP pocket. Met-205 is an S-adenosyl-L-methionine binding site. [4Fe-4S] cluster-binding residues include Cys-268 and Cys-271. 273–275 is a binding site for GTP; the sequence is RVR. Cys-285 contacts [4Fe-4S] cluster.

Belongs to the radical SAM superfamily. MoaA family. In terms of assembly, monomer and homodimer. [4Fe-4S] cluster is required as a cofactor.

It carries out the reaction GTP + AH2 + S-adenosyl-L-methionine = (8S)-3',8-cyclo-7,8-dihydroguanosine 5'-triphosphate + 5'-deoxyadenosine + L-methionine + A + H(+). It participates in cofactor biosynthesis; molybdopterin biosynthesis. Its function is as follows. Catalyzes the cyclization of GTP to (8S)-3',8-cyclo-7,8-dihydroguanosine 5'-triphosphate. The protein is GTP 3',8-cyclase of Nitrobacter winogradskyi (strain ATCC 25391 / DSM 10237 / CIP 104748 / NCIMB 11846 / Nb-255).